The chain runs to 167 residues: Leptin (167 aa).

Residues 1 to 21 (MRCGSLCRFLWLWSCLSYIEA) form the signal peptide. C117 and C167 form a disulfide bridge.

The protein belongs to the leptin family.

It localises to the secreted. Functionally, key player in the regulation of energy balance and body weight control. Once released into the circulation, has central and peripheral effects by binding LEPR, found in many tissues, which results in the activation of several major signaling pathways. In the hypothalamus, acts as an appetite-regulating factor that induces a decrease in food intake and an increase in energy consumption by inducing anorexinogenic factors and suppressing orexigenic neuropeptides, also regulates bone mass and secretion of hypothalamo-pituitary-adrenal hormones. In the periphery, increases basal metabolism, influences reproductive function, regulates pancreatic beta-cell function and insulin secretion, is pro-angiogenic for endothelial cell and affects innate and adaptive immunity. In the arcuate nucleus of the hypothalamus, activates by depolarization POMC neurons inducing FOS and SOCS3 expression to release anorexigenic peptides and inhibits by hyperpolarization NPY neurons inducing SOCS3 with a consequent reduction on release of orexigenic peptides. In addition to its known satiety inducing effect, has a modulatory role in nutrient absorption. In the intestine, reduces glucose absorption by enterocytes by activating PKC and leading to a sequential activation of p38, PI3K and ERK signaling pathways which exerts an inhibitory effect on glucose absorption. Acts as a growth factor on certain tissues, through the activation of different signaling pathways increases expression of genes involved in cell cycle regulation such as CCND1, via JAK2-STAT3 pathway, or VEGFA, via MAPK1/3 and PI3K-AKT1 pathways. May also play an apoptotic role via JAK2-STAT3 pathway and up-regulation of BIRC5 expression. Pro-angiogenic, has mitogenic activity on vascular endothelial cells and plays a role in matrix remodeling by regulating the expression of matrix metalloproteinases (MMPs) and tissue inhibitors of metalloproteinases (TIMPs). In innate immunity, modulates the activity and function of neutrophils by increasing chemotaxis and the secretion of oxygen radicals. Increases phagocytosis by macrophages and enhances secretion of pro-inflammatory mediators. Increases cytotoxic ability of NK cells. Plays a pro-inflammatory role, in synergy with IL1B, by inducing NOS2 which promotes the production of IL6, IL8 and Prostaglandin E2, through a signaling pathway that involves JAK2, PI3K, MAP2K1/MEK1 and MAPK14/p38. In adaptive immunity, promotes the switch of memory T-cells towards T helper-1 cell immune responses. Increases CD4(+)CD25(-) T-cell proliferation and reduces autophagy during TCR (T-cell receptor) stimulation, through MTOR signaling pathway activation and BCL2 up-regulation. The sequence is that of Leptin (LEP) from Phoca vitulina (Harbor seal).